The sequence spans 339 residues: ADP-L-glycero-D-manno-heptose-6-epimerase (339 aa).

NADP(+)-binding positions include 11–12 (FI), 32–33 (DD), Lys39, Lys54, 75–79 (EGACS), and Asn92. The active-site Proton acceptor is the Tyr139. Position 143 (Lys143) interacts with NADP(+). Residue Asn170 coordinates substrate. NADP(+)-binding residues include Val171 and Lys179. The active-site Proton acceptor is the Lys179. Residues Arg181, His188, 202-205 (FGEY), Arg215, and Tyr294 each bind substrate.

It belongs to the NAD(P)-dependent epimerase/dehydratase family. HldD subfamily. In terms of assembly, homopentamer. The cofactor is NADP(+).

The enzyme catalyses ADP-D-glycero-beta-D-manno-heptose = ADP-L-glycero-beta-D-manno-heptose. The protein operates within nucleotide-sugar biosynthesis; ADP-L-glycero-beta-D-manno-heptose biosynthesis; ADP-L-glycero-beta-D-manno-heptose from D-glycero-beta-D-manno-heptose 7-phosphate: step 4/4. In terms of biological role, catalyzes the interconversion between ADP-D-glycero-beta-D-manno-heptose and ADP-L-glycero-beta-D-manno-heptose via an epimerization at carbon 6 of the heptose. In Polynucleobacter necessarius subsp. necessarius (strain STIR1), this protein is ADP-L-glycero-D-manno-heptose-6-epimerase.